The chain runs to 165 residues: Myosin regulatory light chain 2B, cardiac muscle isoform (165 aa).

A2 carries the post-translational modification N,N,N-trimethylalanine. EF-hand domains follow at residues T23–L58, D93–R128, and F129–K164. The Ca(2+) site is built by D36, N38, D40, and D47.

In terms of assembly, myosin is a hexamer of 2 heavy chains and 4 light chains. The N-terminus is blocked. N,N,N-trimethylalanine, found in other myosin light chains would not have been detected in the N-terminal tryptic peptide in PubMed:7319048 because it would remain trimethylated and ninhydrin negative after hydrolysis.

The polypeptide is Myosin regulatory light chain 2B, cardiac muscle isoform (Gallus gallus (Chicken)).